The following is a 319-amino-acid chain: 4-diphosphocytidyl-2-C-methyl-D-erythritol kinase (319 aa).

K18 is an active-site residue. 103–113 (PIGAGLAGGST) is an ATP binding site. Residue D145 is part of the active site.

It belongs to the GHMP kinase family. IspE subfamily.

It catalyses the reaction 4-CDP-2-C-methyl-D-erythritol + ATP = 4-CDP-2-C-methyl-D-erythritol 2-phosphate + ADP + H(+). Its pathway is isoprenoid biosynthesis; isopentenyl diphosphate biosynthesis via DXP pathway; isopentenyl diphosphate from 1-deoxy-D-xylulose 5-phosphate: step 3/6. In terms of biological role, catalyzes the phosphorylation of the position 2 hydroxy group of 4-diphosphocytidyl-2C-methyl-D-erythritol. This Prochlorococcus marinus (strain NATL1A) protein is 4-diphosphocytidyl-2-C-methyl-D-erythritol kinase.